The following is a 425-amino-acid chain: tRNA(Ile)-lysidine synthase (425 aa).

27–32 (SGGLDS) is a binding site for ATP.

Belongs to the tRNA(Ile)-lysidine synthase family.

The protein localises to the cytoplasm. It carries out the reaction cytidine(34) in tRNA(Ile2) + L-lysine + ATP = lysidine(34) in tRNA(Ile2) + AMP + diphosphate + H(+). Ligates lysine onto the cytidine present at position 34 of the AUA codon-specific tRNA(Ile) that contains the anticodon CAU, in an ATP-dependent manner. Cytidine is converted to lysidine, thus changing the amino acid specificity of the tRNA from methionine to isoleucine. The polypeptide is tRNA(Ile)-lysidine synthase (Streptococcus pneumoniae (strain P1031)).